The following is a 1058-amino-acid chain: SIT4-associating protein SAP185 (1058 aa).

Lys-20 participates in a covalent cross-link: Glycyl lysine isopeptide (Lys-Gly) (interchain with G-Cter in ubiquitin). 6 disordered regions span residues 34-71 (TSTE…NREE), 135-202 (SEDR…ELEE), 513-556 (NSQN…TSID), 818-862 (CQEE…DQEQ), 873-892 (TKTR…VPGE), and 934-992 (ELSD…HDYD). Polar residues predominate over residues 42 to 55 (DSNSTDESLESNSF). 2 stretches are compositionally biased toward basic and acidic residues: residues 135-146 (SEDRDLVRGEDK) and 153-175 (ENAK…TRSG). Over residues 176 to 189 (EEEELENEENDSAS) the composition is skewed to acidic residues. The segment covering 190–202 (EDTRVTLPHELEE) has biased composition (basic and acidic residues). Composition is skewed to acidic residues over residues 528 to 546 (ENED…DDTN) and 820 to 837 (EEEE…EDEP). A compositionally biased stretch (basic and acidic residues) spans 838-861 (QEYRNGDSVRSKESNSSEGKRDQE). Polar residues predominate over residues 934 to 963 (ELSDGWESSPSNSIPKRASPSKNGMNSPMF). A compositionally biased stretch (basic and acidic residues) spans 967–991 (FELHSPTDEFGGHKDEILSAEGHDY).

Belongs to the SAPS family. Post-translationally, hyperphosphorylated in the absence of SIT4.

In terms of biological role, associates with the SIT4 phosphatase in a cell cycle dependent manner. May be directly or indirectly involved in SIT4-dependent functions in budding and in normal G1 cyclin expression. The protein is SIT4-associating protein SAP185 (SAP185) of Saccharomyces cerevisiae (strain ATCC 204508 / S288c) (Baker's yeast).